Consider the following 274-residue polypeptide: Non-heme haloperoxidase (274 aa).

The AB hydrolase-1 domain maps to 22–254 (PIMFHHGWPL…RLKVYPGLSH (233 aa)). Catalysis depends on residues Ser-95, Asp-225, and His-254.

The protein belongs to the AB hydrolase superfamily. Bacterial non-heme haloperoxidase / perhydrolase family.

This chain is Non-heme haloperoxidase (thcF), found in Rhodococcus erythropolis (Arthrobacter picolinophilus).